A 673-amino-acid polypeptide reads, in one-letter code: Putative transcription factor tau subunit sfc9 (673 aa).

May be a component of the TFIIIC complex.

It localises to the nucleus. The sequence is that of Putative transcription factor tau subunit sfc9 from Schizosaccharomyces pombe (strain 972 / ATCC 24843) (Fission yeast).